A 218-amino-acid polypeptide reads, in one-letter code: Small ribosomal subunit protein uS3 (218 aa).

The region spanning 38–106 (IREFISKRLS…RVHINILEIK (69 aa)) is the KH type-2 domain.

It belongs to the universal ribosomal protein uS3 family. Part of the 30S ribosomal subunit. Forms a tight complex with proteins S10 and S14.

Its function is as follows. Binds the lower part of the 30S subunit head. Binds mRNA in the 70S ribosome, positioning it for translation. The protein is Small ribosomal subunit protein uS3 of Bacillus velezensis (strain DSM 23117 / BGSC 10A6 / LMG 26770 / FZB42) (Bacillus amyloliquefaciens subsp. plantarum).